A 461-amino-acid chain; its full sequence is Cysteine--tRNA ligase (461 aa).

Position 28 (C28) interacts with Zn(2+). A 'HIGH' region motif is present at residues 30-40 (VTIYDLCHIGH). Residues C209, H234, and E238 each contribute to the Zn(2+) site. The 'KMSKS' region motif lies at 266–270 (KMSKS). Residue K269 coordinates ATP.

This sequence belongs to the class-I aminoacyl-tRNA synthetase family. As to quaternary structure, monomer. Zn(2+) is required as a cofactor.

The protein localises to the cytoplasm. The catalysed reaction is tRNA(Cys) + L-cysteine + ATP = L-cysteinyl-tRNA(Cys) + AMP + diphosphate. This Serratia proteamaculans (strain 568) protein is Cysteine--tRNA ligase.